A 474-amino-acid chain; its full sequence is Glycogen synthase (474 aa).

Lys-12 lines the ADP-alpha-D-glucose pocket.

The protein belongs to the glycosyltransferase 1 family. Bacterial/plant glycogen synthase subfamily.

The catalysed reaction is [(1-&gt;4)-alpha-D-glucosyl](n) + ADP-alpha-D-glucose = [(1-&gt;4)-alpha-D-glucosyl](n+1) + ADP + H(+). Its pathway is glycan biosynthesis; glycogen biosynthesis. Functionally, synthesizes alpha-1,4-glucan chains using ADP-glucose. The polypeptide is Glycogen synthase (Xanthomonas campestris pv. campestris (strain 8004)).